A 431-amino-acid chain; its full sequence is Glutamate-1-semialdehyde 2,1-aminomutase (431 aa).

Lys265 carries the post-translational modification N6-(pyridoxal phosphate)lysine.

The protein belongs to the class-III pyridoxal-phosphate-dependent aminotransferase family. HemL subfamily. In terms of assembly, homodimer. Pyridoxal 5'-phosphate is required as a cofactor.

The protein localises to the cytoplasm. The enzyme catalyses (S)-4-amino-5-oxopentanoate = 5-aminolevulinate. It participates in porphyrin-containing compound metabolism; protoporphyrin-IX biosynthesis; 5-aminolevulinate from L-glutamyl-tRNA(Glu): step 2/2. This is Glutamate-1-semialdehyde 2,1-aminomutase from Pseudoalteromonas atlantica (strain T6c / ATCC BAA-1087).